We begin with the raw amino-acid sequence, 389 residues long: Curcumin synthase 1 (389 aa).

Residue Cys164 is part of the active site.

This sequence belongs to the thiolase-like superfamily. Chalcone/stilbene synthases family. Homodimer. As to expression, expressed in both the leaf and rhizome, with higher expression in the rhizome.

It catalyses the reaction (E)-feruloylacetyl-CoA + (E)-feruloyl-CoA + H2O = curcumin + CO2 + 2 CoA. The protein operates within secondary metabolite biosynthesis; flavonoid biosynthesis. Catalyzes the synthesis of curcumin by condensing feruloyl-CoA with a diketide-CoA in the curcuminoid biosynthesis. This chain is Curcumin synthase 1 (CURS1), found in Curcuma longa (Turmeric).